The primary structure comprises 81 residues: Cortexin-2 (81 aa).

A helical membrane pass occupies residues 29–49 (TAFAFVGMLLVFLGLLIVRCF).

Belongs to the cortexin family.

It is found in the membrane. This Danio rerio (Zebrafish) protein is Cortexin-2 (ctxn2).